A 631-amino-acid chain; its full sequence is FAST kinase domain-containing protein 4 (631 aa).

Residues 1-107 constitute a mitochondrion transit peptide; sequence MAAHLVKRCT…NQAAMVLIRL (107 aa). Ser553 bears the Phosphoserine mark. The RAP domain occupies 561 to 619; that stretch reads LAFLRWEFPNFNSRSKDLLGRFVLARRHIVAAGFLIVDVPFYEWLELKSEWQKGAYLKD.

Belongs to the FAST kinase family. In terms of tissue distribution, ubiquitously expressed. Expression detected in spleen, thymus, testis, ovary, colon, heart, smooth muscle, kidney, brain, lung, liver and white adipose tissue with highest expression in smooth muscle.

The protein localises to the mitochondrion matrix. Plays a role in processing of mitochondrial RNA precursors and in stabilization of a subset of mature mitochondrial RNA species, such as MT-CO1, MT-CO2, MT-CYB, MT-CO3, MT-ND3, MT-ND5 and MT-ATP8/6. May play a role in cell cycle progression. The protein is FAST kinase domain-containing protein 4 of Homo sapiens (Human).